The sequence spans 667 residues: Putative L-type lectin-domain containing receptor kinase I.4 (667 aa).

Residues M1–G21 form the signal peptide. The Extracellular portion of the chain corresponds to Q22–P294. The interval E24–S257 is legume-lectin like. N55, N110, N124, N128, N181, N204, and N225 each carry an N-linked (GlcNAc...) asparagine glycan. Residues L295 to Y315 traverse the membrane as a helical segment. The Cytoplasmic portion of the chain corresponds to W316–R667. The region spanning F350 to P625 is the Protein kinase domain. Residues V356–V364 and K378 contribute to the ATP site. Residue D474 is the Proton acceptor of the active site.

It in the C-terminal section; belongs to the protein kinase superfamily. Ser/Thr protein kinase family. This sequence in the N-terminal section; belongs to the leguminous lectin family.

Its subcellular location is the cell membrane. The catalysed reaction is L-seryl-[protein] + ATP = O-phospho-L-seryl-[protein] + ADP + H(+). It carries out the reaction L-threonyl-[protein] + ATP = O-phospho-L-threonyl-[protein] + ADP + H(+). This is Putative L-type lectin-domain containing receptor kinase I.4 (LECRK14) from Arabidopsis thaliana (Mouse-ear cress).